The primary structure comprises 745 residues: Heterogeneous nuclear ribonucleoprotein U-like protein 2 (745 aa).

An SAP domain is found at 3–37 (VKRLKVTELRSELQRRGLDSRGLKMDLAQRLQEAL). Disordered regions lie at residues 44–239 (DEAG…DEEE) and 625–664 (EEAR…GQRR). Residues 73 to 97 (GDEEEEDDDEEEDEEALLEDEDEEP) show a composition bias toward acidic residues. Over residues 142–161 (GEEHDNGKGEEDGPEERSGD) the composition is skewed to basic and acidic residues. S159 is subject to Phosphoserine. The residue at position 163 (T163) is a Phosphothreonine. Residues S166, S183, S186, S224, and S226 each carry the phosphoserine modification. Basic and acidic residues predominate over residues 183 to 221 (SEKSKPAGSDGERRGVKRQRDEKDEHGRAYYEFREEAYH). Positions 224-417 (SKSPPPPEEE…VELNFGQKEE (194 aa)) constitute a B30.2/SPRY domain. Acidic residues predominate over residues 230 to 239 (PEEEAKDEEE). The segment covering 625–637 (EEARKLLPPSEKR) has biased composition (basic and acidic residues). The segment covering 638 to 652 (TNRRNNRNKRNRQNR) has biased composition (basic residues). R654, R682, R736, and R745 each carry omega-N-methylarginine.

In terms of assembly, binds to MLF1 and retains it in the nucleus.

It localises to the nucleus. The sequence is that of Heterogeneous nuclear ribonucleoprotein U-like protein 2 (Hnrnpul2) from Mus musculus (Mouse).